The chain runs to 293 residues: MLRGSLTALVTPFEKSGRFDEKAFRAFVEWQLGEGTTGLVPVGTTGESPTLSHDEHRHVVKVCIEVANGRAPVVAGAGSNNTAEAVGLVQYAEKAGADAALVVTPYYNKPTQRGLYEHFAAVARATKLPIIIYNIPPRSVIDMMPETMGRLAHDFKNIVGVKDATGKVERVSEQRMTCGKDFIQLSGEDASALGFNAHGGVGCISVTSNVAPRLCAEFQEATLSGDSVKALELQDRLLPLHKAIFLEPGVSGAKYALSKLGKVENVLRSPLVTVEESTAAKIDAAMKHAGLIN.

Position 45 (Thr-45) interacts with pyruvate. Tyr-133 acts as the Proton donor/acceptor in catalysis. Lys-162 serves as the catalytic Schiff-base intermediate with substrate. Ile-204 contributes to the pyruvate binding site.

This sequence belongs to the DapA family. As to quaternary structure, homotetramer; dimer of dimers.

The protein resides in the cytoplasm. It carries out the reaction L-aspartate 4-semialdehyde + pyruvate = (2S,4S)-4-hydroxy-2,3,4,5-tetrahydrodipicolinate + H2O + H(+). The protein operates within amino-acid biosynthesis; L-lysine biosynthesis via DAP pathway; (S)-tetrahydrodipicolinate from L-aspartate: step 3/4. In terms of biological role, catalyzes the condensation of (S)-aspartate-beta-semialdehyde [(S)-ASA] and pyruvate to 4-hydroxy-tetrahydrodipicolinate (HTPA). This chain is 4-hydroxy-tetrahydrodipicolinate synthase, found in Mesorhizobium japonicum (strain LMG 29417 / CECT 9101 / MAFF 303099) (Mesorhizobium loti (strain MAFF 303099)).